The following is a 189-amino-acid chain: Probable nicotinate-nucleotide adenylyltransferase (189 aa).

This sequence belongs to the NadD family.

It carries out the reaction nicotinate beta-D-ribonucleotide + ATP + H(+) = deamido-NAD(+) + diphosphate. It participates in cofactor biosynthesis; NAD(+) biosynthesis; deamido-NAD(+) from nicotinate D-ribonucleotide: step 1/1. Functionally, catalyzes the reversible adenylation of nicotinate mononucleotide (NaMN) to nicotinic acid adenine dinucleotide (NaAD). This chain is Probable nicotinate-nucleotide adenylyltransferase, found in Bacillus anthracis (strain CDC 684 / NRRL 3495).